A 228-amino-acid polypeptide reads, in one-letter code: Apoptosis regulator R1 (228 aa).

Residues 1–21 (LNPKKKENNGVKNGDREKQHE) show a composition bias toward basic and acidic residues. The disordered stretch occupies residues 1 to 29 (LNPKKKENNGVKNGDREKQHETGNTIFRG). The BH1 signature appears at 120–139 (SLFQGGVNWGRIVAFFVFGA). A BH2 motif is present at residues 171–186 (DWIQSNGGWNGFLTLY). The helical transmembrane segment at 207–227 (TVLTGAVALGALMTVGALFAS) threads the bilayer.

The protein belongs to the Bcl-2 family.

The protein localises to the membrane. Its function is as follows. Could be the homolog of mammalian Bcl-W. The sequence is that of Apoptosis regulator R1 from Xenopus laevis (African clawed frog).